Reading from the N-terminus, the 537-residue chain is Extracellular exo-inulinase inuE (537 aa).

A signal peptide spans 1 to 19 (MARLLKAVTVCALAGIAHA). The active site involves D41. N49, N67, N112, N300, N363, N398, N430, and N531 each carry an N-linked (GlcNAc...) asparagine glycan.

It belongs to the glycosyl hydrolase 32 family.

The protein resides in the secreted. It catalyses the reaction Hydrolysis of terminal, non-reducing (2-&gt;1)- and (2-&gt;6)-linked beta-D-fructofuranose residues in fructans.. The catalytic activity is increased by manganese cathions, but strongly inhibited by other metal ions such as copper, aluminum, silver, iron, nickel, zinc and magnesium cathions. Its function is as follows. Exo-inulinase involved in utilization of the plant storage polymer inulin, consisting of fructooligosaccharides with a degree of polymerization (DP) value from 2 to 60. Splits off terminal fructose units successively from the non-reducing end of the inulin molecule, and also hydrolyze sucrose and raffinose. The chain is Extracellular exo-inulinase inuE (exoI) from Aspergillus ficuum.